The chain runs to 462 residues: Bifunctional protein HldE (462 aa).

The tract at residues Met1–Pro309 is ribokinase. ATP is bound at residue Asn186 to Glu189. The active site involves Asp254. The segment at Phe336–Cys462 is cytidylyltransferase.

It in the N-terminal section; belongs to the carbohydrate kinase PfkB family. The protein in the C-terminal section; belongs to the cytidylyltransferase family. Homodimer.

It catalyses the reaction D-glycero-beta-D-manno-heptose 7-phosphate + ATP = D-glycero-beta-D-manno-heptose 1,7-bisphosphate + ADP + H(+). The enzyme catalyses D-glycero-beta-D-manno-heptose 1-phosphate + ATP + H(+) = ADP-D-glycero-beta-D-manno-heptose + diphosphate. The protein operates within nucleotide-sugar biosynthesis; ADP-L-glycero-beta-D-manno-heptose biosynthesis; ADP-L-glycero-beta-D-manno-heptose from D-glycero-beta-D-manno-heptose 7-phosphate: step 1/4. Its pathway is nucleotide-sugar biosynthesis; ADP-L-glycero-beta-D-manno-heptose biosynthesis; ADP-L-glycero-beta-D-manno-heptose from D-glycero-beta-D-manno-heptose 7-phosphate: step 3/4. In terms of biological role, catalyzes the phosphorylation of D-glycero-D-manno-heptose 7-phosphate at the C-1 position to selectively form D-glycero-beta-D-manno-heptose-1,7-bisphosphate. Its function is as follows. Catalyzes the ADP transfer from ATP to D-glycero-beta-D-manno-heptose 1-phosphate, yielding ADP-D-glycero-beta-D-manno-heptose. The protein is Bifunctional protein HldE of Nitratiruptor sp. (strain SB155-2).